The sequence spans 1265 residues: 1-phosphatidylinositol 4,5-bisphosphate phosphodiesterase gamma-2 (1265 aa).

Residues 20–131 enclose the PH domain; it reads RALELGTVMT…WLSGLKILHQ (112 aa). Positions 312–456 constitute a PI-PLC X-box domain; it reads QDMNNPLSHY…LREKIIIKHK (145 aa). Catalysis depends on residues His327 and His372. 2 consecutive SH2 domains span residues 532 to 635 and 646 to 735; these read WFHK…TDPV and WYYD…RYPV. Tyr753 and Tyr759 each carry phosphotyrosine; by BTK. Positions 769–829 constitute an SH3 domain; sequence MPQRTVKALY…PSNYVEDISA (61 aa). Residues 930 to 1044 enclose the PI-PLC Y-box domain; the sequence is LSDLVVYCKP…GYVLQPESMR (115 aa). One can recognise a C2 domain in the interval 1038-1169; it reads LQPESMRSEK…SGFRSVPLKN (132 aa). Phosphotyrosine; by BTK is present on Tyr1197. Phosphotyrosine is present on residues Tyr1217 and Tyr1245.

As to quaternary structure, part of a complex composed of EEIG1, TNFRSF11A/RANK, PLCG2, GAB2, TEC and BTK; complex formation increases in the presence of TNFSF11/RANKL. Interacts (via SH2 domain) with CSF1R (tyrosine phosphorylated). Interacts constitutively with THEMIS2. Ca(2+) serves as cofactor. In terms of processing, phosphorylated on tyrosine residues by CSF1R. Phosphorylated on tyrosine residues by BTK and SYK; upon ligand-induced activation of a variety of growth factor receptors and immune system receptors. Phosphorylation leads to increased phospholipase activity.

It localises to the membrane raft. It catalyses the reaction a 1,2-diacyl-sn-glycero-3-phospho-(1D-myo-inositol-4,5-bisphosphate) + H2O = 1D-myo-inositol 1,4,5-trisphosphate + a 1,2-diacyl-sn-glycerol + H(+). In terms of biological role, the production of the second messenger molecules diacylglycerol (DAG) and inositol 1,4,5-trisphosphate (IP3) is mediated by activated phosphatidylinositol-specific phospholipase C enzymes. It is a crucial enzyme in transmembrane signaling. In Rattus norvegicus (Rat), this protein is 1-phosphatidylinositol 4,5-bisphosphate phosphodiesterase gamma-2.